A 228-amino-acid polypeptide reads, in one-letter code: Cytochrome c oxidase subunit 2 (228 aa).

Topologically, residues 1–26 (MATWANLGLQNSSSPLMEQLNFFHDH) are mitochondrial intermembrane. Residues 27-48 (TVLILIMITVMITYVMGMLFFN) form a helical membrane-spanning segment. Residues 49–62 (KFTNRYLLHGQTIE) lie on the Mitochondrial matrix side of the membrane. A helical membrane pass occupies residues 63–82 (IIWTILPAIILMFIAFPSLR). The Mitochondrial intermembrane portion of the chain corresponds to 83–228 (LLYLLDEINS…FIKWVSSQLN (146 aa)). Cu cation contacts are provided by His161, Cys196, Glu198, Cys200, His204, and Met207. Glu198 serves as a coordination point for Mg(2+).

This sequence belongs to the cytochrome c oxidase subunit 2 family. In terms of assembly, component of the cytochrome c oxidase (complex IV, CIV), a multisubunit enzyme composed of a catalytic core of 3 subunits and several supernumerary subunits. The complex exists as a monomer or a dimer and forms supercomplexes (SCs) in the inner mitochondrial membrane with ubiquinol-cytochrome c oxidoreductase (cytochrome b-c1 complex, complex III, CIII). Requires Cu cation as cofactor.

Its subcellular location is the mitochondrion inner membrane. It carries out the reaction 4 Fe(II)-[cytochrome c] + O2 + 8 H(+)(in) = 4 Fe(III)-[cytochrome c] + 2 H2O + 4 H(+)(out). Functionally, component of the cytochrome c oxidase, the last enzyme in the mitochondrial electron transport chain which drives oxidative phosphorylation. The respiratory chain contains 3 multisubunit complexes succinate dehydrogenase (complex II, CII), ubiquinol-cytochrome c oxidoreductase (cytochrome b-c1 complex, complex III, CIII) and cytochrome c oxidase (complex IV, CIV), that cooperate to transfer electrons derived from NADH and succinate to molecular oxygen, creating an electrochemical gradient over the inner membrane that drives transmembrane transport and the ATP synthase. Cytochrome c oxidase is the component of the respiratory chain that catalyzes the reduction of oxygen to water. Electrons originating from reduced cytochrome c in the intermembrane space (IMS) are transferred via the dinuclear copper A center (CU(A)) of subunit 2 and heme A of subunit 1 to the active site in subunit 1, a binuclear center (BNC) formed by heme A3 and copper B (CU(B)). The BNC reduces molecular oxygen to 2 water molecules using 4 electrons from cytochrome c in the IMS and 4 protons from the mitochondrial matrix. The protein is Cytochrome c oxidase subunit 2 (COII) of Culex quinquefasciatus (Southern house mosquito).